The sequence spans 339 residues: Tetraacyldisaccharide 4'-kinase (339 aa).

An ATP-binding site is contributed by Val-62 to Thr-69.

The protein belongs to the LpxK family.

The enzyme catalyses a lipid A disaccharide + ATP = a lipid IVA + ADP + H(+). The protein operates within glycolipid biosynthesis; lipid IV(A) biosynthesis; lipid IV(A) from (3R)-3-hydroxytetradecanoyl-[acyl-carrier-protein] and UDP-N-acetyl-alpha-D-glucosamine: step 6/6. In terms of biological role, transfers the gamma-phosphate of ATP to the 4'-position of a tetraacyldisaccharide 1-phosphate intermediate (termed DS-1-P) to form tetraacyldisaccharide 1,4'-bis-phosphate (lipid IVA). This is Tetraacyldisaccharide 4'-kinase from Xylella fastidiosa (strain M23).